Reading from the N-terminus, the 425-residue chain is Serine--tRNA ligase (425 aa).

Thr-231–Glu-233 provides a ligand contact to L-serine. Residue Arg-262–Glu-264 coordinates ATP. Glu-285 contacts L-serine. Glu-349–Ser-352 contributes to the ATP binding site. Residue Ser-385 participates in L-serine binding.

The protein belongs to the class-II aminoacyl-tRNA synthetase family. Type-1 seryl-tRNA synthetase subfamily. In terms of assembly, homodimer. The tRNA molecule binds across the dimer.

It localises to the cytoplasm. The enzyme catalyses tRNA(Ser) + L-serine + ATP = L-seryl-tRNA(Ser) + AMP + diphosphate + H(+). It carries out the reaction tRNA(Sec) + L-serine + ATP = L-seryl-tRNA(Sec) + AMP + diphosphate + H(+). It participates in aminoacyl-tRNA biosynthesis; selenocysteinyl-tRNA(Sec) biosynthesis; L-seryl-tRNA(Sec) from L-serine and tRNA(Sec): step 1/1. Its function is as follows. Catalyzes the attachment of serine to tRNA(Ser). Is also able to aminoacylate tRNA(Sec) with serine, to form the misacylated tRNA L-seryl-tRNA(Sec), which will be further converted into selenocysteinyl-tRNA(Sec). This Bacillus licheniformis (strain ATCC 14580 / DSM 13 / JCM 2505 / CCUG 7422 / NBRC 12200 / NCIMB 9375 / NCTC 10341 / NRRL NRS-1264 / Gibson 46) protein is Serine--tRNA ligase.